The following is a 20-amino-acid chain: Methyl-coenzyme M reductase subunit gamma (20 aa).

Residues 1–20 form a disordered region; sequence AYERQFYPGATSVAENNIGH.

The protein belongs to the methyl-coenzyme M reductase gamma subunit family. MCR from M.thermophila is a heterotrimer composed of an alpha, a beta, and a gamma subunit. Coenzyme F430 is required as a cofactor.

The protein resides in the cytoplasm. The enzyme catalyses coenzyme B + methyl-coenzyme M = methane + coenzyme M-coenzyme B heterodisulfide. Its pathway is one-carbon metabolism; methyl-coenzyme M reduction; methane from methyl-coenzyme M: step 1/1. Component of the methyl-coenzyme M reductase (MCR) I that catalyzes the reductive cleavage of methyl-coenzyme M (CoM-S-CH3 or 2-(methylthio)ethanesulfonate) using coenzyme B (CoB or 7-mercaptoheptanoylthreonine phosphate) as reductant which results in the production of methane and the mixed heterodisulfide of CoB and CoM (CoM-S-S-CoB). This is the final step in methanogenesis. In Methanosarcina thermophila, this protein is Methyl-coenzyme M reductase subunit gamma.